Consider the following 835-residue polypeptide: Probable alpha-glucuronidase A (835 aa).

The signal sequence occupies residues 1-18 (MRWSFLTVLLWLVSLTGA). Asn-49, Asn-101, Asn-148, Asn-221, Asn-278, Asn-309, Asn-342, Asn-460, Asn-522, Asn-571, Asn-677, and Asn-727 each carry an N-linked (GlcNAc...) asparagine glycan.

Belongs to the glycosyl hydrolase 67 family.

The protein resides in the secreted. It catalyses the reaction an alpha-D-glucuronoside + H2O = D-glucuronate + an alcohol. In terms of biological role, alpha-glucuronidase involved in the hydrolysis of xylan, a major structural heterogeneous polysaccharide found in plant biomass representing the second most abundant polysaccharide in the biosphere, after cellulose. Releases 4-O-methylglucuronic acid from xylan. This Aspergillus oryzae (strain ATCC 42149 / RIB 40) (Yellow koji mold) protein is Probable alpha-glucuronidase A (aguA).